We begin with the raw amino-acid sequence, 463 residues long: tRNA-2-methylthio-N(6)-dimethylallyladenosine synthase (463 aa).

Residues 18–136 (RKLYIETYGC…LPNLVGAAEQ (119 aa)) enclose the MTTase N-terminal domain. 6 residues coordinate [4Fe-4S] cluster: C27, C63, C100, C174, C178, and C181. The region spanning 160 to 392 (GGVHINGFVS…IALQNRLSEE (233 aa)) is the Radical SAM core domain. One can recognise a TRAM domain in the interval 395 to 458 (KRDIGKTFEV…SATLFGEVVE (64 aa)).

It belongs to the methylthiotransferase family. MiaB subfamily. Monomer. Requires [4Fe-4S] cluster as cofactor.

The protein localises to the cytoplasm. It carries out the reaction N(6)-dimethylallyladenosine(37) in tRNA + (sulfur carrier)-SH + AH2 + 2 S-adenosyl-L-methionine = 2-methylsulfanyl-N(6)-dimethylallyladenosine(37) in tRNA + (sulfur carrier)-H + 5'-deoxyadenosine + L-methionine + A + S-adenosyl-L-homocysteine + 2 H(+). In terms of biological role, catalyzes the methylthiolation of N6-(dimethylallyl)adenosine (i(6)A), leading to the formation of 2-methylthio-N6-(dimethylallyl)adenosine (ms(2)i(6)A) at position 37 in tRNAs that read codons beginning with uridine. The protein is tRNA-2-methylthio-N(6)-dimethylallyladenosine synthase of Porphyromonas gingivalis (strain ATCC BAA-308 / W83).